Here is a 289-residue protein sequence, read N- to C-terminus: Cbb3-type cytochrome c oxidase subunit FixP (289 aa).

The Cytoplasmic portion of the chain corresponds to 1–33; that stretch reads MADKHKHVDEVSGVETTGHEWDGIRELNNPMPR. Residues 34-56 traverse the membrane as a helical segment; the sequence is WWVYSFYATIIWAIGYAIAYPSW. Residues 57-289 lie on the Periplasmic side of the membrane; sequence PMLTEATKGM…VFVHSLGGGE (233 aa). 2 Cytochrome c domains span residues 110-198 and 205-286; these read FAVS…VSLT and HLVQ…HSLG. C123, C126, H127, M175, C218, C221, H222, and M263 together coordinate heme c.

It belongs to the CcoP / FixP family. In terms of assembly, component of the cbb3-type cytochrome c oxidase at least composed of FixN, FixO, FixQ and FixP. Requires heme c as cofactor.

The protein localises to the cell inner membrane. It functions in the pathway energy metabolism; oxidative phosphorylation. Functionally, C-type cytochrome. Part of the cbb3-type cytochrome c oxidase complex. FixP subunit is required for transferring electrons from donor cytochrome c via its heme groups to FixO subunit. From there, electrons are shuttled to the catalytic binuclear center of FixN subunit where oxygen reduction takes place. The complex also functions as a proton pump. This Rhizobium meliloti (strain 1021) (Ensifer meliloti) protein is Cbb3-type cytochrome c oxidase subunit FixP.